A 209-amino-acid chain; its full sequence is Glutathione S-transferase 1-1 (209 aa).

The GST N-terminal domain maps to 1 to 81 (MADFYYLPGS…YLVEKYGKTD (81 aa)). Glutathione-binding positions include Ser10, 51 to 53 (HTI), and 65 to 67 (ESR). One can recognise a GST C-terminal domain in the interval 87–209 (CPKKRAVINQ…GCLEFKKYFE (123 aa)).

This sequence belongs to the GST superfamily. Theta family. In terms of assembly, homodimer.

It catalyses the reaction RX + glutathione = an S-substituted glutathione + a halide anion + H(+). The enzyme catalyses 1,1,1-trichloro-2,2-bis(4-chlorophenyl)ethane = 1,1-dichloro-2,2-bis(4-chlorophenyl)ethylene + chloride + H(+). Conjugation of reduced glutathione to a wide number of exogenous and endogenous hydrophobic electrophiles. Has DDT dehydrochlorinase activity. This is Glutathione S-transferase 1-1 (GstD1) from Drosophila simulans (Fruit fly).